The chain runs to 273 residues: Large ribosomal subunit protein uL2 (273 aa).

The interval 228 to 273 (VDHPHGGGEGKTSGGRHPVTPWGFPTKGKKTRKNKRTSKFIVKKRK) is disordered. The segment covering 254-273 (KGKKTRKNKRTSKFIVKKRK) has biased composition (basic residues).

It belongs to the universal ribosomal protein uL2 family. In terms of assembly, part of the 50S ribosomal subunit. Forms a bridge to the 30S subunit in the 70S ribosome.

In terms of biological role, one of the primary rRNA binding proteins. Required for association of the 30S and 50S subunits to form the 70S ribosome, for tRNA binding and peptide bond formation. It has been suggested to have peptidyltransferase activity; this is somewhat controversial. Makes several contacts with the 16S rRNA in the 70S ribosome. This Rickettsia akari (strain Hartford) protein is Large ribosomal subunit protein uL2.